The sequence spans 520 residues: Genome polyprotein (520 aa).

Ser2 carries the N-acetylserine; by host modification. Positions 2 to 23 are interaction with STAT1; that stretch reads STNPKPQRKTKRNTNRRPQDVK. The interaction with EIF2AK2/PKR stretch occupies residues 2-58; sequence STNPKPQRKTKRNTNRRPQDVKFPGGGQIVGGVYLLTRRGPRLGVRATRKTSERSQP. The interaction with DDX3X stretch occupies residues 2–59; the sequence is STNPKPQRKTKRNTNRRPQDVKFPGGGQIVGGVYLLTRRGPRLGVRATRKTSERSQPR. Residues 2–75 are disordered; that stretch reads STNPKPQRKT…PKARRPEGRA (74 aa). Residues 2 to 168 lie on the Cytoplasmic side of the membrane; sequence STNPKPQRKT…EDGVNYATGN (167 aa). 2 short sequence motifs (nuclear localization signal) span residues 5–13 and 38–43; these read PKPQRKTKR and TRRGPR. Residues 7-16 show a composition bias toward basic residues; sequence PQRKTKRNTN. A Phosphoserine; by host modification is found at Ser53. 2 short sequence motifs (nuclear localization signal) span residues 58-64 and 66-71; these read PRGRRQP and PKARRP. Over residues 58-68 the composition is skewed to basic residues; it reads PRGRRQPIPKA. Position 99 is a phosphoserine; by host (Ser99). Residues 112–152 are important for endoplasmic reticulum and mitochondrial localization; sequence PRRRSRNLGKVIDTLTCGFADLMGYIPLVGAPLGGASRALA. Position 116 is a phosphoserine; by host PKA (Ser116). Positions 122–173 are interaction with APOA2; the sequence is VIDTLTCGFADLMGYIPLVGAPLGGASRALAHGVRVLEDGVNYATGNLPGCS. The interval 164 to 167 is important for lipid droplets localization; sequence YATG. The chain crosses the membrane as a helical span at residues 169–189; sequence LPGCSFSIFLSALMSCLTTPA. The propeptide at 178–191 is ER anchor for the core protein, removed in mature form by host signal peptidase; sequence LSALMSCLTTPASA. Over 190–358 the chain is Lumenal; that stretch reads SAYEVRNVSG…AGAHWGVLAG (169 aa). Asn196, Asn209, Asn234, and Asn250 each carry an N-linked (GlcNAc...) asparagine; by host glycan. Positions 265 to 296 are important for fusion; it reads LVGAATLCSAMYVGDLCGSVFLVSQLFTFSPR. A glycan (N-linked (GlcNAc...) asparagine; by host) is linked at Asn305. The chain crosses the membrane as a helical span at residues 359-379; that stretch reads LAYYSMVGNWAKVLIVMLLFA. Over 380–520 the chain is Lumenal; the sequence is GVDGANTHTV…TPSPVVVGTT (141 aa). The interval 385–411 is HVR1; that stretch reads NTHTVGGTEGFATQRLTSLFALGPSQK. Residue Asn418 is glycosylated (N-linked (GlcNAc...) asparagine; by host). Residues Asn424, Asn431, and Asn449 are each glycosylated (N-linked (GlcNAc...) (high mannose) asparagine; by host). Cys453 and Cys460 are disulfide-bonded. The tract at residues 474–479 is HVR2; it reads TYAEPS. The CD81-binding 1 stretch occupies residues 480–493; that stretch reads ISEQRPYCWHYAPR. Disulfide bonds link Cys487–Cys495 and Cys504–Cys509.

This sequence belongs to the hepacivirus polyprotein family. Homooligomer. Interacts with E1 (via C-terminus). Interacts with the non-structural protein 5A. Interacts (via N-terminus) with host STAT1 (via SH2 domain); this interaction results in decreased STAT1 phosphorylation and ubiquitin-mediated proteasome-dependent STAT1 degradation, leading to decreased IFN-stimulated gene transcription. Interacts with host STAT3; this interaction constitutively activates STAT3. Interacts with host LTBR receptor. Interacts with host TNFRSF1A receptor and possibly induces apoptosis. Interacts with host HNRPK. Interacts with host YWHAE. Interacts with host UBE3A/E6AP. Interacts with host DDX3X. Interacts with host APOA2. Interacts with host RXRA protein. Interacts with host SP110 isoform 3/Sp110b; this interaction sequesters the transcriptional corepressor SP110 away from the nucleus. Interacts with host CREB3 nuclear transcription protein; this interaction triggers cell transformation. Interacts with host ACY3. Interacts with host C1QR1. Interacts with host RBM24; this interaction, which enhances the interaction of the mature core protein with 5'-UTR, may inhibit viral translation and favor replication. Interacts with host EIF2AK2/PKR; this interaction induces the autophosphorylation of EIF2AK2. Part of the viral assembly initiation complex composed of NS2, E1, E2, NS3, NS4A, NS5A and the mature core protein. As to quaternary structure, forms a heterodimer with envelope glycoprotein E2. Interacts with mature core protein. Interacts with protease NS2. The heterodimer E1/E2 interacts with host CLDN1; this interaction plays a role in viral entry into host cell. Interacts with host SPSB2 (via C-terminus). Part of the viral assembly initiation complex composed of NS2, E1, E2, NS3, NS4A, NS5A and the mature core protein. In terms of assembly, forms a heterodimer with envelope glycoprotein E1. Interacts with host CD81 and SCARB1 receptors; these interactions play a role in viral entry into host cell. Interacts with host EIF2AK2/PKR; this interaction inhibits EIF2AK2 and probably allows the virus to evade the innate immune response. Interacts with host CD209/DC-SIGN and CLEC4M/DC-SIGNR. Interact with host SPCS1; this interaction is essential for viral particle assembly. Interacts with protease NS2. The heterodimer E1/E2 interacts with host CLDN1; this interaction plays a role in viral entry into host cell. Part of the viral assembly initiation complex composed of NS2, E1, E2, NS3, NS4A, NS5A and the mature core protein. Specific enzymatic cleavages in vivo yield mature proteins. The structural proteins, core, E1, E2 and p7 are produced by proteolytic processing by host signal peptidases. The core protein precursor is synthesized as a 23 kDa, which is retained in the ER membrane through the hydrophobic signal peptide. Cleavage by the signal peptidase releases the 21 kDa mature core protein. The cleavage of the core protein precursor occurs between aminoacids 176 and 188 but the exact cleavage site is not known. Some degraded forms of the core protein appear as well during the course of infection. The other proteins (p7, NS2, NS3, NS4A, NS4B, NS5A and NS5B) are cleaved by the viral proteases. Autoprocessing between NS2 and NS3 is mediated by the NS2 cysteine protease catalytic domain and regulated by the NS3 N-terminal domain. In terms of processing, phosphorylated by host PKC and PKA. Post-translationally, ubiquitinated; mediated by UBE3A and leading to core protein subsequent proteasomal degradation. Highly N-glycosylated.

It localises to the host endoplasmic reticulum membrane. The protein localises to the host mitochondrion membrane. Its subcellular location is the virion. The protein resides in the host cytoplasm. It is found in the host nucleus. It localises to the host lipid droplet. The protein localises to the virion membrane. Its function is as follows. Packages viral RNA to form a viral nucleocapsid, and promotes virion budding. Participates in the viral particle production as a result of its interaction with the non-structural protein 5A. Binds RNA and may function as a RNA chaperone to induce the RNA structural rearrangements taking place during virus replication. Modulates viral translation initiation by interacting with viral IRES and 40S ribosomal subunit. Affects various cell signaling pathways, host immunity and lipid metabolism. Prevents the establishment of cellular antiviral state by blocking the interferon-alpha/beta (IFN-alpha/beta) and IFN-gamma signaling pathways and by blocking the formation of phosphorylated STAT1 and promoting ubiquitin-mediated proteasome-dependent degradation of STAT1. Activates STAT3 leading to cellular transformation. Regulates the activity of cellular genes, including c-myc and c-fos. May repress the promoter of p53, and sequester CREB3 and SP110 isoform 3/Sp110b in the cytoplasm. Represses cell cycle negative regulating factor CDKN1A, thereby interrupting an important check point of normal cell cycle regulation. Targets transcription factors involved in the regulation of inflammatory responses and in the immune response: suppresses TNF-induced NF-kappa-B activation, and activates AP-1. Binds to dendritic cells (DCs) via C1QR1, resulting in down-regulation of T-lymphocytes proliferation. Alters lipid metabolism by interacting with hepatocellular proteins involved in lipid accumulation and storage. Induces up-regulation of FAS promoter activity, and thereby contributes to the increased triglyceride accumulation in hepatocytes (steatosis). Functionally, forms a heterodimer with envelope glycoprotein E2, which mediates virus attachment to the host cell, virion internalization through clathrin-dependent endocytosis and fusion with host membrane. Fusion with the host cell is most likely mediated by both E1 and E2, through conformational rearrangements of the heterodimer required for fusion rather than a classical class II fusion mechanism. E1/E2 heterodimer binds host apolipoproteins such as APOB and ApoE thereby forming a lipo-viro-particle (LVP). APOE associated to the LVP allows the initial virus attachment to cell surface receptors such as the heparan sulfate proteoglycans (HSPGs), syndecan-1 (SDC1), syndecan-1 (SDC2), the low-density lipoprotein receptor (LDLR) and scavenger receptor class B type I (SCARB1). The cholesterol transfer activity of SCARB1 allows E2 exposure and binding of E2 to SCARB1 and the tetraspanin CD81. E1/E2 heterodimer binding on CD81 activates the epithelial growth factor receptor (EGFR) signaling pathway. Diffusion of the complex E1-E2-EGFR-SCARB1-CD81 to the cell lateral membrane allows further interaction with Claudin 1 (CLDN1) and occludin (OCLN) to finally trigger HCV entry. Forms a heterodimer with envelope glycoprotein E1, which mediates virus attachment to the host cell, virion internalization through clathrin-dependent endocytosis and fusion with host membrane. Fusion with the host cell is most likely mediated by both E1 and E2, through conformational rearrangements of the heterodimer required for fusion rather than a classical class II fusion mechanism. The interaction between envelope glycoprotein E2 and host apolipoprotein E/APOE allows the proper assembly, maturation and infectivity of the viral particles. This interaction is probably promoted via the up-regulation of cellular autophagy by the virus. E1/E2 heterodimer binds host apolipoproteins such as APOB and APOE thereby forming a lipo-viro-particle (LVP). APOE associated to the LVP allows the initial virus attachment to cell surface receptors such as the heparan sulfate proteoglycans (HSPGs), syndecan-1 (SDC1), syndecan-1 (SDC2), the low-density lipoprotein receptor (LDLR) and scavenger receptor class B type I (SCARB1). The cholesterol transfer activity of SCARB1 allows E2 exposure and binding of E2 to SCARB1 and the tetraspanin CD81. E1/E2 heterodimer binding on CD81 activates the epithelial growth factor receptor (EGFR) signaling pathway. Diffusion of the complex E1-E2-EGFR-SCARB1-CD81 to the cell lateral membrane allows further interaction with Claudin 1 (CLDN1) and occludin (OCLN) to finally trigger HCV entry. Inhibits host EIF2AK2/PKR activation, preventing the establishment of an antiviral state. Viral ligand for CD209/DC-SIGN and CLEC4M/DC-SIGNR, which are respectively found on dendritic cells (DCs), and on liver sinusoidal endothelial cells and macrophage-like cells of lymph node sinuses. These interactions allow the capture of circulating HCV particles by these cells and subsequent facilitated transmission to permissive cells such as hepatocytes and lymphocyte subpopulations. The polypeptide is Genome polyprotein (Hepatitis C virus (isolate HCV-KF) (HCV)).